A 136-amino-acid polypeptide reads, in one-letter code: Small ribosomal subunit protein eS8 (136 aa).

The protein belongs to the eukaryotic ribosomal protein eS8 family. In terms of assembly, part of the 30S ribosomal subunit.

The sequence is that of Small ribosomal subunit protein eS8 (rps8e) from Aeropyrum pernix (strain ATCC 700893 / DSM 11879 / JCM 9820 / NBRC 100138 / K1).